The sequence spans 230 residues: NAD(P)H-hydrate epimerase (230 aa).

The region spanning 11-223 is the YjeF N-terminal domain; the sequence is YAAADIRAAE…DVGLDLSGAT (213 aa). 59 to 63 contacts (6S)-NADPHX; the sequence is NNGGD. Positions 60 and 125 each coordinate K(+). (6S)-NADPHX-binding positions include 129 to 137 and aspartate 165; that span reads GIGTTDSPA. K(+) is bound at residue serine 168.

Belongs to the NnrE/AIBP family. K(+) serves as cofactor.

The enzyme catalyses (6R)-NADHX = (6S)-NADHX. It carries out the reaction (6R)-NADPHX = (6S)-NADPHX. Catalyzes the epimerization of the S- and R-forms of NAD(P)HX, a damaged form of NAD(P)H that is a result of enzymatic or heat-dependent hydration. This is a prerequisite for the S-specific NAD(P)H-hydrate dehydratase to allow the repair of both epimers of NAD(P)HX. The sequence is that of NAD(P)H-hydrate epimerase from Clavibacter michiganensis subsp. michiganensis (strain NCPPB 382).